A 251-amino-acid chain; its full sequence is Probable transcriptional regulatory protein Francci3_1368 (251 aa).

The protein belongs to the TACO1 family.

Its subcellular location is the cytoplasm. The sequence is that of Probable transcriptional regulatory protein Francci3_1368 from Frankia casuarinae (strain DSM 45818 / CECT 9043 / HFP020203 / CcI3).